The sequence spans 568 residues: Proline--tRNA ligase (568 aa).

It belongs to the class-II aminoacyl-tRNA synthetase family. ProS type 1 subfamily. In terms of assembly, homodimer.

It localises to the cytoplasm. It carries out the reaction tRNA(Pro) + L-proline + ATP = L-prolyl-tRNA(Pro) + AMP + diphosphate. Catalyzes the attachment of proline to tRNA(Pro) in a two-step reaction: proline is first activated by ATP to form Pro-AMP and then transferred to the acceptor end of tRNA(Pro). As ProRS can inadvertently accommodate and process non-cognate amino acids such as alanine and cysteine, to avoid such errors it has two additional distinct editing activities against alanine. One activity is designated as 'pretransfer' editing and involves the tRNA(Pro)-independent hydrolysis of activated Ala-AMP. The other activity is designated 'posttransfer' editing and involves deacylation of mischarged Ala-tRNA(Pro). The misacylated Cys-tRNA(Pro) is not edited by ProRS. The sequence is that of Proline--tRNA ligase from Listeria welshimeri serovar 6b (strain ATCC 35897 / DSM 20650 / CCUG 15529 / CIP 8149 / NCTC 11857 / SLCC 5334 / V8).